A 100-amino-acid polypeptide reads, in one-letter code: Integration host factor subunit alpha (100 aa).

This sequence belongs to the bacterial histone-like protein family. Heterodimer of an alpha and a beta chain.

This protein is one of the two subunits of integration host factor, a specific DNA-binding protein that functions in genetic recombination as well as in transcriptional and translational control. The sequence is that of Integration host factor subunit alpha from Ectopseudomonas mendocina (strain ymp) (Pseudomonas mendocina).